The sequence spans 187 residues: Core-binding factor subunit beta (187 aa).

S10 bears the Phosphoserine; by CK2 mark. A disordered region spans residues 139-187 (AQQAFEEARRRTREFEDRDRSHREEMEARRQQDPSPGSNLGGGDDLKLR). Positions 144–170 (EEARRRTREFEDRDRSHREEMEARRQQ) are enriched in basic and acidic residues. A Phosphoserine; by PKC modification is found at S159.

This sequence belongs to the CBF-beta family. As to quaternary structure, heterodimer with RUNX1, RUNX2 and RUNX3. Interacts with COPRS. Found in a complex with PRMT5 and RUNX1. In terms of tissue distribution, expressed in all tissues tested. Highest level in thymus, but also abundantly expressed in muscle, lung and brain.

The protein resides in the nucleus. Its function is as follows. Forms the heterodimeric complex core-binding factor (CBF) with RUNX family proteins (RUNX1, RUNX2, and RUNX3). RUNX members modulate the transcription of their target genes through recognizing the core consensus binding sequence 5'-TGTGGT-3', or very rarely, 5'-TGCGGT-3', within their regulatory regions via their runt domain, while CBFB is a non-DNA-binding regulatory subunit that allosterically enhances the sequence-specific DNA-binding capacity of RUNX. The heterodimers bind to the core site of a number of enhancers and promoters, including murine leukemia virus, polyomavirus enhancer, T-cell receptor enhancers, LCK, IL3 and GM-CSF promoters. CBF complexes repress ZBTB7B transcription factor during cytotoxic (CD8+) T cell development. They bind to RUNX-binding sequence within the ZBTB7B locus acting as transcriptional silencer and allowing for cytotoxic T cell differentiation. This Mus musculus (Mouse) protein is Core-binding factor subunit beta (Cbfb).